Reading from the N-terminus, the 263-residue chain is tRNA pseudouridine synthase A (263 aa).

The active-site Nucleophile is the Asp-53. Tyr-111 serves as a coordination point for substrate. The disordered stretch occupies residues 232–263 (TAPGHGLISGRSNMTNGKLENNKTTNPCVTKY). Polar residues predominate over residues 241 to 263 (GRSNMTNGKLENNKTTNPCVTKY).

This sequence belongs to the tRNA pseudouridine synthase TruA family. In terms of assembly, homodimer.

It catalyses the reaction uridine(38/39/40) in tRNA = pseudouridine(38/39/40) in tRNA. Its function is as follows. Formation of pseudouridine at positions 38, 39 and 40 in the anticodon stem and loop of transfer RNAs. This Halalkalibacterium halodurans (strain ATCC BAA-125 / DSM 18197 / FERM 7344 / JCM 9153 / C-125) (Bacillus halodurans) protein is tRNA pseudouridine synthase A.